An 817-amino-acid chain; its full sequence is Collagen-like protein 4 (817 aa).

Collagen-like domains lie at 83–142, 145–264, and 268–327; these read GDTG…KGQD, GSKG…KGDD, and GIQG…KGLK. Disordered stretches follow at residues 87-107, 120-458, and 479-543; these read NKGE…GDNG, FNGS…DKGD, and IIGD…KGDI. Residues Asn106 and Asn121 are each glycosylated (N-linked (GlcNAc...) asparagine; by host). Basic and acidic residues-rich tracts occupy residues 126–141 and 149–161; these read IKGD…DKGQ and QKGE…DDGI. Asn183 carries N-linked (GlcNAc...) asparagine; by host glycosylation. Basic and acidic residues-rich tracts occupy residues 212–224 and 233–245; these read IKGD…EDGI and SKGE…DDGT. Positions 246–260 are enriched in low complexity; that stretch reads KGITGLKGTKGNSGS. Residues 294-341 are compositionally biased toward basic and acidic residues; sequence KGSDGDKGNKGLDGIKGDLGDDGIKGDKGIKGLKGDTGNSDKGDKGSK. Residues Asn345 and Asn360 are each glycosylated (N-linked (GlcNAc...) asparagine; by host). 2 Collagen-like domains span residues 352–411 and 430–489; these read GDKG…KGLV and GDKG…KGIK. 3 stretches are compositionally biased toward basic and acidic residues: residues 354-368, 377-390, and 428-458; these read KGSK…ESGD, SKGD…KGDL, and SKGD…DKGD. Low complexity predominate over residues 480–494; it reads IGDNGSKGIKGSSNN. Asn483 is a glycosylation site (N-linked (GlcNAc...) asparagine; by host). Composition is skewed to basic and acidic residues over residues 495 to 504, 515 to 525, and 533 to 543; these read KGDKGDKGNT, IKGDKGIKGSK, and EKGEKGTKGDI. The Collagen-like 6 domain occupies 512 to 570; that stretch reads TKGIKGDKGIKGSKGDLGSVGEKGEKGTKGDIGTKGETGLKGIIGDKGELGSKGIKGLS. 3 N-linked (GlcNAc...) asparagine; by host glycosylation sites follow: Asn709, Asn712, and Asn715. Residues 757 to 771 show a composition bias toward gly residues; sequence GGGGASAFGNGGRGG. The segment at 757–804 is disordered; the sequence is GGGGASAFGNGGRGGNTTQAATKGEYGSGGGGGSEFSPSGSTNGGDGG. The N-linked (GlcNAc...) asparagine; by host glycan is linked to Asn772.

Post-translationally, may be hydroxylated on lysine by the viral-encoded procollagen-lysine,2-oxoglutarate 5-dioxygenase.

It localises to the virion. May participate in the formation of a layer of cross-linked glycosylated fibrils at the viral surface thus giving it a hairy-like appearance. The protein is Collagen-like protein 4 of Acanthamoeba polyphaga (Amoeba).